The primary structure comprises 132 residues: Z-ring associated protein G (132 aa).

A helical membrane pass occupies residues 1–21; it reads MTWEYALIGLVVGIIIGAVAM. Residues 95 to 132 form a disordered region; it reads FRNRLAESEASNDQAPVQMPRDYSEGASGLLRTGAKRD.

The protein belongs to the ZapG family.

The protein resides in the cell inner membrane. Functionally, involved in cell division, cell envelope biogenesis and cell shape maintenance. The polypeptide is Z-ring associated protein G (Escherichia coli O157:H7).